The primary structure comprises 131 residues: Small ribosomal subunit protein uS9 (131 aa).

Belongs to the universal ribosomal protein uS9 family.

The protein is Small ribosomal subunit protein uS9 of Actinobacillus pleuropneumoniae serotype 5b (strain L20).